We begin with the raw amino-acid sequence, 236 residues long: Snake venom serine protease pallase (236 aa).

In terms of domain architecture, Peptidase S1 spans 1–227; sequence VIGGDECNIN…HLDWIENIIA (227 aa). 6 cysteine pairs are disulfide-bonded: C7–C139, C26–C42, C74–C234, C118–C188, C150–C167, and C178–C203. Residues H41 and D86 each act as charge relay system in the active site. S182 functions as the Charge relay system in the catalytic mechanism.

It belongs to the peptidase S1 family. Snake venom subfamily. In terms of assembly, monomer. As to expression, expressed by the venom gland.

Its subcellular location is the secreted. Its function is as follows. Snake venom serine protease that may act in the hemostasis system of the prey. The protein is Snake venom serine protease pallase of Gloydius halys (Chinese water mocassin).